Here is a 92-residue protein sequence, read N- to C-terminus: Translation initiation factor IF-1 (92 aa).

Residues 1–72 form the S1-like domain; that stretch reads MAKEELIQFE…EKGRLIFRHK (72 aa). Residues 69 to 92 are disordered; the sequence is FRHKDERPGGPPRSGPPRGQFRRR.

The protein belongs to the IF-1 family. As to quaternary structure, component of the 30S ribosomal translation pre-initiation complex which assembles on the 30S ribosome in the order IF-2 and IF-3, IF-1 and N-formylmethionyl-tRNA(fMet); mRNA recruitment can occur at any time during PIC assembly.

The protein resides in the cytoplasm. Functionally, one of the essential components for the initiation of protein synthesis. Stabilizes the binding of IF-2 and IF-3 on the 30S subunit to which N-formylmethionyl-tRNA(fMet) subsequently binds. Helps modulate mRNA selection, yielding the 30S pre-initiation complex (PIC). Upon addition of the 50S ribosomal subunit IF-1, IF-2 and IF-3 are released leaving the mature 70S translation initiation complex. This chain is Translation initiation factor IF-1, found in Rhodopseudomonas palustris (strain ATCC BAA-98 / CGA009).